We begin with the raw amino-acid sequence, 101 residues long: Urease subunit beta (101 aa).

Belongs to the urease beta subunit family. In terms of assembly, heterotrimer of UreA (gamma), UreB (beta) and UreC (alpha) subunits. Three heterotrimers associate to form the active enzyme.

The protein localises to the cytoplasm. It carries out the reaction urea + 2 H2O + H(+) = hydrogencarbonate + 2 NH4(+). It functions in the pathway nitrogen metabolism; urea degradation; CO(2) and NH(3) from urea (urease route): step 1/1. The chain is Urease subunit beta from Cereibacter sphaeroides (strain ATCC 17029 / ATH 2.4.9) (Rhodobacter sphaeroides).